Reading from the N-terminus, the 452-residue chain is Glutathione gamma-glutamylcysteinyltransferase 2 (452 aa).

A Peptidase C83 domain is found at Met-1–Arg-220. Residues Glu-287–Lys-315 adopt a coiled-coil conformation.

It belongs to the phytochelatin synthase family. As to expression, expressed in shoots, roots, leaves, stems and flowers.

It catalyses the reaction [Glu(-Cys)](n)-Gly + glutathione + H(+) = [Glu(-Cys)](n+1)-Gly + glycine. Requires cadmium for activity. Also activated in heterologous system by AsO(4)(3-) ions, but not by Cu(2+), Zn(2+), Mn(2+) or Ni(2+) ions. Its function is as follows. Involved in the synthesis of phytochelatins (PC) and homophytochelatins (hPC), the heavy-metal-binding peptides of plants. In Arabidopsis thaliana (Mouse-ear cress), this protein is Glutathione gamma-glutamylcysteinyltransferase 2 (PCS2).